A 275-amino-acid polypeptide reads, in one-letter code: Shikimate dehydrogenase (NADP(+)) (275 aa).

Residues 16 to 18 (SKS) and threonine 63 contribute to the shikimate site. The active-site Proton acceptor is the lysine 67. 2 residues coordinate shikimate: asparagine 88 and aspartate 104. NADP(+)-binding positions include 129-133 (GAGGA), 153-158 (NRTVAR), and methionine 219. Position 221 (tyrosine 221) interacts with shikimate. Position 243 (glycine 243) interacts with NADP(+).

Belongs to the shikimate dehydrogenase family. In terms of assembly, homodimer.

It carries out the reaction shikimate + NADP(+) = 3-dehydroshikimate + NADPH + H(+). It functions in the pathway metabolic intermediate biosynthesis; chorismate biosynthesis; chorismate from D-erythrose 4-phosphate and phosphoenolpyruvate: step 4/7. Functionally, involved in the biosynthesis of the chorismate, which leads to the biosynthesis of aromatic amino acids. Catalyzes the reversible NADPH linked reduction of 3-dehydroshikimate (DHSA) to yield shikimate (SA). The polypeptide is Shikimate dehydrogenase (NADP(+)) (Marinobacter nauticus (strain ATCC 700491 / DSM 11845 / VT8) (Marinobacter aquaeolei)).